The following is a 58-amino-acid chain: Alpha-conotoxin AuIB (58 aa).

The signal sequence occupies residues methionine 1–serine 16. The propeptide occupies phenylalanine 17–lysine 39. Intrachain disulfides connect cysteine 41–cysteine 47 and cysteine 42–cysteine 54. Cysteine 54 is subject to Cysteine amide.

As to expression, expressed by the venom duct.

The protein resides in the secreted. Functionally, alpha-conotoxins act on postsynaptic membranes, they bind to the nicotinic acetylcholine receptors (nAChR) and thus inhibit them. This toxin blocks mammalian nAChR alpha-3-beta-4/CHRNA3-CHRNB4 subunits. Also exhibits inhibition of D.melanogaster alpha-7/CHRNA7 nAChRs. This is Alpha-conotoxin AuIB from Conus aulicus (Princely cone).